We begin with the raw amino-acid sequence, 90 residues long: DNA-binding protein HU (90 aa).

Position 4 is a phosphothreonine (threonine 4). Residues 56-90 are disordered; that stretch reads AARKGRNPQTGEEMEIPASKVPAFKPGKALKDAVK.

It belongs to the bacterial histone-like protein family. As to quaternary structure, homodimer.

Its function is as follows. Histone-like DNA-binding protein which is capable of wrapping DNA to stabilize it, and thus to prevent its denaturation under extreme environmental conditions. In Geobacillus stearothermophilus (Bacillus stearothermophilus), this protein is DNA-binding protein HU (hup).